The sequence spans 298 residues: N-acetylmuramic acid 6-phosphate etherase (298 aa).

The SIS domain maps to 55 to 218 (IHAQVSGGGR…STGLMIKSGK (164 aa)). E83 serves as the catalytic Proton donor. Residue E114 is part of the active site.

Belongs to the GCKR-like family. MurNAc-6-P etherase subfamily. As to quaternary structure, homodimer.

It carries out the reaction N-acetyl-D-muramate 6-phosphate + H2O = N-acetyl-D-glucosamine 6-phosphate + (R)-lactate. It participates in amino-sugar metabolism; 1,6-anhydro-N-acetylmuramate degradation. Its pathway is amino-sugar metabolism; N-acetylmuramate degradation. The protein operates within cell wall biogenesis; peptidoglycan recycling. Functionally, specifically catalyzes the cleavage of the D-lactyl ether substituent of MurNAc 6-phosphate, producing GlcNAc 6-phosphate and D-lactate. Together with AnmK, is also required for the utilization of anhydro-N-acetylmuramic acid (anhMurNAc) either imported from the medium or derived from its own cell wall murein, and thus plays a role in cell wall recycling. The chain is N-acetylmuramic acid 6-phosphate etherase from Escherichia coli O157:H7 (strain EC4115 / EHEC).